Consider the following 89-residue polypeptide: MATKTYYFYVLLCADGSFYGGFTDDVKARVATHNAGKGAKYTAQRLPVRLLYHQAFADKHDALSAEWHFKHQTRHRKEVFLEDHQVEWR.

The 76-residue stretch at Lys4–Val79 folds into the GIY-YIG domain.

The protein belongs to the UPF0213 family.

The chain is UPF0213 protein LSEI_1587 from Lacticaseibacillus paracasei (strain ATCC 334 / BCRC 17002 / CCUG 31169 / CIP 107868 / KCTC 3260 / NRRL B-441) (Lactobacillus paracasei).